A 440-amino-acid chain; its full sequence is Probable exopolygalacturonase B (440 aa).

An N-terminal signal peptide occupies residues 1-20; it reads MRLHFLPLVALCATTASSLA. N-linked (GlcNAc...) asparagine glycans are attached at residues Asn-65, Asn-190, and Asn-230. Asp-260 functions as the Proton donor in the catalytic mechanism. Cysteines 262 and 279 form a disulfide. N-linked (GlcNAc...) asparagine glycans are attached at residues Asn-268 and Asn-280. His-283 is a catalytic residue. N-linked (GlcNAc...) asparagine glycosylation is found at Asn-307, Asn-334, and Asn-371. A disulfide bridge connects residues Cys-397 and Cys-403. N-linked (GlcNAc...) asparagine glycosylation is present at Asn-412.

This sequence belongs to the glycosyl hydrolase 28 family.

It is found in the secreted. The enzyme catalyses [(1-&gt;4)-alpha-D-galacturonosyl](n) + H2O = alpha-D-galacturonate + [(1-&gt;4)-alpha-D-galacturonosyl](n-1). Its function is as follows. Specific in hydrolyzing the terminal glycosidic bond of polygalacturonic acid and oligogalacturonates. This Emericella nidulans (strain FGSC A4 / ATCC 38163 / CBS 112.46 / NRRL 194 / M139) (Aspergillus nidulans) protein is Probable exopolygalacturonase B (pgxB).